The chain runs to 278 residues: tRNA pseudouridine synthase A (278 aa).

Catalysis depends on Asp-52, which acts as the Nucleophile. Residue Tyr-111 participates in substrate binding. The span at 253–264 (AKAGPLEAAPLG) shows a compositional bias: low complexity. Positions 253-278 (AKAGPLEAAPLGEAPLKEATLKEDWR) are disordered. Residues 267-278 (PLKEATLKEDWR) are compositionally biased toward basic and acidic residues.

It belongs to the tRNA pseudouridine synthase TruA family. As to quaternary structure, homodimer.

The catalysed reaction is uridine(38/39/40) in tRNA = pseudouridine(38/39/40) in tRNA. Its function is as follows. Formation of pseudouridine at positions 38, 39 and 40 in the anticodon stem and loop of transfer RNAs. This chain is tRNA pseudouridine synthase A, found in Rhodospirillum rubrum (strain ATCC 11170 / ATH 1.1.1 / DSM 467 / LMG 4362 / NCIMB 8255 / S1).